A 395-amino-acid polypeptide reads, in one-letter code: Cyclic AMP-responsive element-binding protein 3-like protein 4 (395 aa).

The Cytoplasmic segment spans residues 1-295; it reads MDLGIPDLLD…QTSNKAAQTS (295 aa). A disordered region spans residues 82–108; sequence EASPGSDSGISEDPCHPDSPPAPRATS. The bZIP domain occupies 217-280; sequence VLKKVRRKIR…ISLVAQLRQL (64 aa). Positions 219–248 are basic motif; that stretch reads KKVRRKIRNKQSAQDSRRRKKEYIDGLESR. The leucine-zipper stretch occupies residues 259–280; the sequence is LQKKVQELERHNISLVAQLRQL. A helical; Signal-anchor for type II membrane protein membrane pass occupies residues 296–316; it reads TCVLILLFSLALIILPSFSPF. Topologically, residues 317-395 are lumenal; sequence QSRPEAGSED…IRSVLHADEM (79 aa). Positions 355-395 are disordered; that stretch reads RLREPPGAKDANGSTRTLLEKMGGKPRPSGRIRSVLHADEM. The N-linked (GlcNAc...) asparagine glycan is linked to N366.

Belongs to the bZIP family. ATF subfamily. As to quaternary structure, binds DNA as a dimer. N-glycosylated in the C-terminal region. Post-translationally, controlled by regulated intramembrane proteolysis (RIP). Following ER stress a fragment containing the cytoplasmic transcription factor domain is released by proteolysis. The cleavage seems to be performed sequentially by site-1 and site-2 proteases (PS1 and PS2). PS1 cleavage may be suppressed by a determinant in the C-terminal region. In terms of tissue distribution, according to PubMed:11830526, exclusively expressed in the prostate. Expressed in breast and prostate cancer cell lines. Expressed in prostatic luminal epithelial cells (at protein level). Expression is significantly more abundant in prostate cancer than in benign prostatic tissue (prostatic hyperplasia). According to PubMed:12111373, also expressed in brain, pancreas and skeletal muscle, and at lower levels in small intestine, testis, leukocyte and thymus.

It localises to the endoplasmic reticulum membrane. Its subcellular location is the golgi apparatus membrane. It is found in the nucleus. In terms of biological role, transcriptional activator that may play a role in the unfolded protein response. Binds to the UPR element (UPRE) but not to CRE element. Preferentially binds DNA with to the consensus sequence 5'-T[GT]ACGT[GA][GT]-3' and has transcriptional activation activity from UPRE. Binds to NF-kappa-B site and has transcriptional activation activity from NF-kappa-B-containing regulatory elements. The sequence is that of Cyclic AMP-responsive element-binding protein 3-like protein 4 (CREB3L4) from Homo sapiens (Human).